Consider the following 24-residue polypeptide: uncharacterized protein (24 aa).

At 1 to 3 (MKK) the chain is on the cytoplasmic side. The chain crosses the membrane as a helical span at residues 4-24 (TTIIMMGVAIIVVLGTELGWW).

The protein localises to the cell inner membrane. This is an uncharacterized protein from Escherichia coli (strain K12).